Consider the following 87-residue polypeptide: MAMRFLNIGYGNIVSAHRIIAIVSPESAPIKRTVQEAREHNALLDATYGRKTRAVIVMDDGHVVLSPIQPETIAHRLNNKEDLSEEG.

This sequence belongs to the RemA family.

The protein is Putative regulatory protein BCG9842_B1272 of Bacillus cereus (strain G9842).